The sequence spans 364 residues: MAKQTPLYDQHLACGARMVDFHGWMMPLHYGSQMDEHHIVRTHAGMFDVSHMTIVDLHGTGCRDFLRYLLANDIAKLTEKGKALYTGMLNASGGVIDDLIVYYLSNDFYRLVVNSATREKDLAWINEHVANYPVDIQVRDDLALIAVQGPDAQAKVESLLNDEQKQTIAGMKPFFGVQAGDLFIATTGYTGEAGYEVALPKEQAADFWQKLLSVGVKPAGLGARDTLRLEAGMNLYGQEMDETISPLVANMGWTIAWKPEDRQFIGREALEKQREEGTEQLVGLVMREKGVLRGGLAVSFTDEMGTLHSGVITSGTFSPTLGFSIALARVPQGIGEQAVVQIRNREMPVQVVKPSFVRAGKPLV.

The protein belongs to the GcvT family. As to quaternary structure, the glycine cleavage system is composed of four proteins: P, T, L and H.

It carries out the reaction N(6)-[(R)-S(8)-aminomethyldihydrolipoyl]-L-lysyl-[protein] + (6S)-5,6,7,8-tetrahydrofolate = N(6)-[(R)-dihydrolipoyl]-L-lysyl-[protein] + (6R)-5,10-methylene-5,6,7,8-tetrahydrofolate + NH4(+). In terms of biological role, the glycine cleavage system catalyzes the degradation of glycine. This chain is Aminomethyltransferase, found in Photorhabdus laumondii subsp. laumondii (strain DSM 15139 / CIP 105565 / TT01) (Photorhabdus luminescens subsp. laumondii).